A 432-amino-acid chain; its full sequence is Glutamate-1-semialdehyde 2,1-aminomutase (432 aa).

Lys270 is subject to N6-(pyridoxal phosphate)lysine.

This sequence belongs to the class-III pyridoxal-phosphate-dependent aminotransferase family. HemL subfamily. Homodimer. Pyridoxal 5'-phosphate is required as a cofactor.

It localises to the cytoplasm. The catalysed reaction is (S)-4-amino-5-oxopentanoate = 5-aminolevulinate. It functions in the pathway porphyrin-containing compound metabolism; protoporphyrin-IX biosynthesis; 5-aminolevulinate from L-glutamyl-tRNA(Glu): step 2/2. The chain is Glutamate-1-semialdehyde 2,1-aminomutase from Acinetobacter baylyi (strain ATCC 33305 / BD413 / ADP1).